Reading from the N-terminus, the 248-residue chain is 1-(5-phosphoribosyl)-5-[(5-phosphoribosylamino)methylideneamino] imidazole-4-carboxamide isomerase (248 aa).

D17 functions as the Proton acceptor in the catalytic mechanism. D136 functions as the Proton donor in the catalytic mechanism.

The protein belongs to the HisA/HisF family.

It is found in the cytoplasm. It catalyses the reaction 1-(5-phospho-beta-D-ribosyl)-5-[(5-phospho-beta-D-ribosylamino)methylideneamino]imidazole-4-carboxamide = 5-[(5-phospho-1-deoxy-D-ribulos-1-ylimino)methylamino]-1-(5-phospho-beta-D-ribosyl)imidazole-4-carboxamide. It participates in amino-acid biosynthesis; L-histidine biosynthesis; L-histidine from 5-phospho-alpha-D-ribose 1-diphosphate: step 4/9. The polypeptide is 1-(5-phosphoribosyl)-5-[(5-phosphoribosylamino)methylideneamino] imidazole-4-carboxamide isomerase (Arthrobacter sp. (strain FB24)).